Here is a 346-residue protein sequence, read N- to C-terminus: Holliday junction branch migration complex subunit RuvB (346 aa).

Residues 2–183 form a large ATPase domain (RuvB-L) region; it reads TDDRIIGAGA…FGIVQRLEFY (182 aa). Residues I22, R23, G64, K67, T68, T69, 130 to 132, R173, Y183, and R220 contribute to the ATP site; that span reads EDF. T68 is a Mg(2+) binding site. The segment at 184–254 is small ATPAse domain (RuvB-S); it reads SVEELTRIVR…VAQAAMKMLK (71 aa). The segment at 257–346 is head domain (RuvB-H); sequence PEGFDELDRR…DLFAEVPDVG (90 aa). DNA is bound by residues R293, R312, and R317.

The protein belongs to the RuvB family. As to quaternary structure, homohexamer. Forms an RuvA(8)-RuvB(12)-Holliday junction (HJ) complex. HJ DNA is sandwiched between 2 RuvA tetramers; dsDNA enters through RuvA and exits via RuvB. An RuvB hexamer assembles on each DNA strand where it exits the tetramer. Each RuvB hexamer is contacted by two RuvA subunits (via domain III) on 2 adjacent RuvB subunits; this complex drives branch migration. In the full resolvosome a probable DNA-RuvA(4)-RuvB(12)-RuvC(2) complex forms which resolves the HJ.

It is found in the cytoplasm. It carries out the reaction ATP + H2O = ADP + phosphate + H(+). The RuvA-RuvB-RuvC complex processes Holliday junction (HJ) DNA during genetic recombination and DNA repair, while the RuvA-RuvB complex plays an important role in the rescue of blocked DNA replication forks via replication fork reversal (RFR). RuvA specifically binds to HJ cruciform DNA, conferring on it an open structure. The RuvB hexamer acts as an ATP-dependent pump, pulling dsDNA into and through the RuvAB complex. RuvB forms 2 homohexamers on either side of HJ DNA bound by 1 or 2 RuvA tetramers; 4 subunits per hexamer contact DNA at a time. Coordinated motions by a converter formed by DNA-disengaged RuvB subunits stimulates ATP hydrolysis and nucleotide exchange. Immobilization of the converter enables RuvB to convert the ATP-contained energy into a lever motion, pulling 2 nucleotides of DNA out of the RuvA tetramer per ATP hydrolyzed, thus driving DNA branch migration. The RuvB motors rotate together with the DNA substrate, which together with the progressing nucleotide cycle form the mechanistic basis for DNA recombination by continuous HJ branch migration. Branch migration allows RuvC to scan DNA until it finds its consensus sequence, where it cleaves and resolves cruciform DNA. The sequence is that of Holliday junction branch migration complex subunit RuvB from Stenotrophomonas maltophilia (strain R551-3).